We begin with the raw amino-acid sequence, 289 residues long: 4-hydroxy-tetrahydrodipicolinate synthase (289 aa).

T42 contributes to the pyruvate binding site. The active-site Proton donor/acceptor is the Y129. Catalysis depends on K157, which acts as the Schiff-base intermediate with substrate. A pyruvate-binding site is contributed by I198.

The protein belongs to the DapA family. As to quaternary structure, homotetramer; dimer of dimers.

Its subcellular location is the cytoplasm. The enzyme catalyses L-aspartate 4-semialdehyde + pyruvate = (2S,4S)-4-hydroxy-2,3,4,5-tetrahydrodipicolinate + H2O + H(+). Its pathway is amino-acid biosynthesis; L-lysine biosynthesis via DAP pathway; (S)-tetrahydrodipicolinate from L-aspartate: step 3/4. In terms of biological role, catalyzes the condensation of (S)-aspartate-beta-semialdehyde [(S)-ASA] and pyruvate to 4-hydroxy-tetrahydrodipicolinate (HTPA). The chain is 4-hydroxy-tetrahydrodipicolinate synthase from Chlamydia caviae (strain ATCC VR-813 / DSM 19441 / 03DC25 / GPIC) (Chlamydophila caviae).